The primary structure comprises 1378 residues: Disease resistance protein RRS1 (1378 aa).

In terms of domain architecture, TIR spans 5–146 (EKDEEFVCIS…EIVRDVYETH (142 aa)). The NB-ARC domain occupies 170-421 (IGIRCVGIWG…LLEGCGFFPH (252 aa)). 179–186 (GMPGIGKT) lines the ATP pocket. LRR repeat units follow at residues 498 to 522 (SEEIEGLFLDTSNLRFDLQPSAFKN), 535 to 553 (NPEVHPVINFPTGSLHSLP), 554 to 575 (NELRLLHWENYPLKSLPQNFDP), 577 to 598 (HLVEINMPYSQLQKLWGGTKNL), 621 to 646 (AENLEVIDLQGCTRLQNFPAAGRLLR), 665 to 688 (PPNIEKLHLQGTGILALPVSTVKP), 742 to 766 (LPNMANLDLNVLDLSGCSSLNSIQG), 768 to 793 (PRFLKQLYLGGTAIREVPQLPQSLEI), and 831 to 854 (PRNLKELYFAGTTLREVPQLPLSL). The Nuclear localization signal signature appears at 988 to 1005 (RNFHCWAPGKVVPKVRKD). The WRKY DNA-binding region spans 1204–1272 (IPAIDEGDLW…YLSEHNHPRP (69 aa)). Residues 1300–1321 (RVFQNKDEPNQPHLPSSSTPPR) form a disordered region.

Interacts with PopP2, a R.solanacearum type III effector.

It localises to the nucleus. Its subcellular location is the cytoplasm. In terms of biological role, transcription factor. Interacts specifically with the W box (5'-(T)TGAC[CT]-3'), a frequently occurring elicitor-responsive cis-acting element. Also acts as a disease resistance protein involved in resistance to fungal and bacterial pathogens, including R.solanacearum, P.syringae pv. tomato and C.higginsianum. RRS1 mediated resistance depends on salicylic acid and NDR1 (AC O48915). This chain is Disease resistance protein RRS1, found in Arabidopsis thaliana (Mouse-ear cress).